The chain runs to 194 residues: Fibroblast growth factor 7 (194 aa).

The first 31 residues, 1–31 (MHKWILTWILPTLLYRSCFHIICLVGTISLA), serve as a signal peptide directing secretion. Asn45 carries an N-linked (GlcNAc...) asparagine glycan.

Belongs to the heparin-binding growth factors family. As to quaternary structure, interacts with FGFBP1. Interacts with FGFR2. Affinity between fibroblast growth factors (FGFs) and their receptors is increased by heparan sulfate glycosaminoglycans that function as coreceptors. Epithelial cell.

The protein resides in the secreted. In terms of biological role, plays an important role in the regulation of embryonic development, cell proliferation and cell differentiation. Required for normal branching morphogenesis. Growth factor active on keratinocytes. Possible major paracrine effector of normal epithelial cell proliferation. This is Fibroblast growth factor 7 (FGF7) from Homo sapiens (Human).